The following is a 339-amino-acid chain: Non-homologous end joining protein Ku (339 aa).

One can recognise a Ku domain in the interval 10-187 (ITFGLVNIPV…LPKATTGKPT (178 aa)). 2 disordered regions span residues 230–251 (DSGKTHQLTPPAEEEEAPRQGA) and 263–339 (SLGQ…KHAA). Residues 267-277 (RGKEDKEDATP) are compositionally biased toward basic and acidic residues. The span at 278-289 (ARRKAPARHAAA) shows a compositional bias: basic residues. Low complexity predominate over residues 290 to 310 (RKQPAAKRAATPPAKRASTAA).

Belongs to the prokaryotic Ku family. Homodimer. Interacts with LigD.

With LigD forms a non-homologous end joining (NHEJ) DNA repair enzyme, which repairs dsDNA breaks with reduced fidelity. Binds linear dsDNA with 5'- and 3'- overhangs but not closed circular dsDNA nor ssDNA. Recruits and stimulates the ligase activity of LigD. The protein is Non-homologous end joining protein Ku of Cupriavidus necator (strain ATCC 17699 / DSM 428 / KCTC 22496 / NCIMB 10442 / H16 / Stanier 337) (Ralstonia eutropha).